Here is a 657-residue protein sequence, read N- to C-terminus: Glycogen debranching enzyme (657 aa).

Aspartate 336 serves as the catalytic Nucleophile. The Proton donor role is filled by glutamate 371. Residues 460–481 (ANGEENRDGTNNNYSNNHGKEG) are disordered.

Belongs to the glycosyl hydrolase 13 family.

The enzyme catalyses Hydrolysis of (1-&gt;6)-alpha-D-glucosidic linkages to branches with degrees of polymerization of three or four glucose residues in limit dextrin.. The protein operates within glycan degradation; glycogen degradation. In terms of biological role, removes maltotriose and maltotetraose chains that are attached by 1,6-alpha-linkage to the limit dextrin main chain, generating a debranched limit dextrin. The polypeptide is Glycogen debranching enzyme (Escherichia coli O157:H7).